We begin with the raw amino-acid sequence, 175 residues long: Small ribosomal subunit protein uS5 (175 aa).

Residues 19–82 (WQERVIQIRR…ADGKKHLIDI (64 aa)) enclose the S5 DRBM domain.

It belongs to the universal ribosomal protein uS5 family. In terms of assembly, part of the 30S ribosomal subunit. Contacts proteins S4 and S8.

With S4 and S12 plays an important role in translational accuracy. In terms of biological role, located at the back of the 30S subunit body where it stabilizes the conformation of the head with respect to the body. The polypeptide is Small ribosomal subunit protein uS5 (Nostoc punctiforme (strain ATCC 29133 / PCC 73102)).